The chain runs to 229 residues: NAD-dependent protein deacylase (229 aa).

The 227-residue stretch at M1 to M227 folds into the Deacetylase sirtuin-type domain. Position 9 to 28 (G9 to W28) interacts with NAD(+). The substrate site is built by Y53 and R56. Q86–D89 contributes to the NAD(+) binding site. H104 acts as the Proton acceptor in catalysis. G169 to S171 lines the NAD(+) pocket.

The protein belongs to the sirtuin family. Class III subfamily.

The protein localises to the cytoplasm. It catalyses the reaction N(6)-acetyl-L-lysyl-[protein] + NAD(+) + H2O = 2''-O-acetyl-ADP-D-ribose + nicotinamide + L-lysyl-[protein]. It carries out the reaction N(6)-succinyl-L-lysyl-[protein] + NAD(+) + H2O = 2''-O-succinyl-ADP-D-ribose + nicotinamide + L-lysyl-[protein]. In terms of biological role, NAD-dependent lysine deacetylase and desuccinylase that specifically removes acetyl and succinyl groups on target proteins. Modulates the activities of several proteins which are inactive in their acylated form. This Helicobacter pylori (strain ATCC 700392 / 26695) (Campylobacter pylori) protein is NAD-dependent protein deacylase.